A 91-amino-acid polypeptide reads, in one-letter code: Small ribosomal subunit protein uS19 (91 aa).

It belongs to the universal ribosomal protein uS19 family.

Protein S19 forms a complex with S13 that binds strongly to the 16S ribosomal RNA. The chain is Small ribosomal subunit protein uS19 from Verminephrobacter eiseniae (strain EF01-2).